The primary structure comprises 65 residues: Ubiquinol-cytochrome-c reductase complex assembly factor 6 (65 aa).

Residues 1 to 9 (MPAGVSWPR) are Mitochondrial matrix-facing. The helical; Signal-anchor for type II membrane protein transmembrane segment at 10–32 (YLRMFAASVLSMFAGAQVVHHYY) threads the bilayer. Residues 33-65 (RPDLSIPEIPPKPGELRTELLGLKERQMDSQKQ) are Mitochondrial intermembrane-facing.

Belongs to the UQCC6 family. As to expression, highly expressed in skeletal and cardiac muscle (at protein level).

The protein resides in the mitochondrion inner membrane. Functionally, required for the assembly and stability of the mitochondrial ubiquinol-cytochrome c reductase complex (complex III (CIII) or cytochrome b-c1 complex), a multisubunit transmembrane complex that is part of the mitochondrial electron transport chain (ETC) which drives oxidative phosphorylation. Mediates early complex III biogenesis. Participates in regulating the levels of electron transport chain proteins, and therefore energy supply, in response to changes in energy demand. Also required for cytochrome c oxidase complex (complex IV) assembly. This Danio rerio (Zebrafish) protein is Ubiquinol-cytochrome-c reductase complex assembly factor 6 (uqcc6).